The chain runs to 160 residues: MSVTKKPDLTDPVLKEKLAKGMGHNYYGEPAWPNDLLYIFPVVILGTFACVIGLSVLDPAAIGEPANPFATPLEILPEWYFYPVFQLLRTVPNKLLGVLLMAAVPAGLITVPFIENINKFQNPYRRPIATTLFLVGTLVAVWLGIGATLPIEISLTFGLF.

3 helical membrane passes run 36 to 56, 95 to 115, and 131 to 151; these read LLYI…GLSV, LLGV…PFIE, and TLFL…TLPI.

Belongs to the cytochrome b family. PetD subfamily. The 4 large subunits of the cytochrome b6-f complex are cytochrome b6, subunit IV (17 kDa polypeptide, petD), cytochrome f and the Rieske protein, while the 4 small subunits are petG, petL, petM and petN. The complex functions as a dimer.

It localises to the plastid. It is found in the chloroplast thylakoid membrane. In terms of biological role, component of the cytochrome b6-f complex, which mediates electron transfer between photosystem II (PSII) and photosystem I (PSI), cyclic electron flow around PSI, and state transitions. This Tetradesmus obliquus (Green alga) protein is Cytochrome b6-f complex subunit 4.